A 292-amino-acid polypeptide reads, in one-letter code: Phosphatidylserine decarboxylase proenzyme (292 aa).

Active-site charge relay system; for autoendoproteolytic cleavage activity residues include aspartate 92, histidine 149, and serine 256. The active-site Schiff-base intermediate with substrate; via pyruvic acid; for decarboxylase activity is the serine 256. Serine 256 carries the pyruvic acid (Ser); by autocatalysis modification.

This sequence belongs to the phosphatidylserine decarboxylase family. PSD-B subfamily. Prokaryotic type I sub-subfamily. In terms of assembly, heterodimer of a large membrane-associated beta subunit and a small pyruvoyl-containing alpha subunit. The cofactor is pyruvate. In terms of processing, is synthesized initially as an inactive proenzyme. Formation of the active enzyme involves a self-maturation process in which the active site pyruvoyl group is generated from an internal serine residue via an autocatalytic post-translational modification. Two non-identical subunits are generated from the proenzyme in this reaction, and the pyruvate is formed at the N-terminus of the alpha chain, which is derived from the carboxyl end of the proenzyme. The autoendoproteolytic cleavage occurs by a canonical serine protease mechanism, in which the side chain hydroxyl group of the serine supplies its oxygen atom to form the C-terminus of the beta chain, while the remainder of the serine residue undergoes an oxidative deamination to produce ammonia and the pyruvoyl prosthetic group on the alpha chain. During this reaction, the Ser that is part of the protease active site of the proenzyme becomes the pyruvoyl prosthetic group, which constitutes an essential element of the active site of the mature decarboxylase.

Its subcellular location is the cell membrane. The catalysed reaction is a 1,2-diacyl-sn-glycero-3-phospho-L-serine + H(+) = a 1,2-diacyl-sn-glycero-3-phosphoethanolamine + CO2. Its pathway is phospholipid metabolism; phosphatidylethanolamine biosynthesis; phosphatidylethanolamine from CDP-diacylglycerol: step 2/2. Its function is as follows. Catalyzes the formation of phosphatidylethanolamine (PtdEtn) from phosphatidylserine (PtdSer). This Baumannia cicadellinicola subsp. Homalodisca coagulata protein is Phosphatidylserine decarboxylase proenzyme.